Reading from the N-terminus, the 621-residue chain is F-box/LRR-repeat protein 4 (621 aa).

The residue at position 28 (R28) is an Asymmetric dimethylarginine. Positions 277–332 (NGYFDKLPYELIQLILNHLTLPDLCRLAQTCKLLNQHCCDPLQYIHLNLQPYWAKL) constitute an F-box domain. 9 LRR repeats span residues 376–397 (ELVR…EIIS), 402–421 (NLQD…AFSH), 427–448 (GLKR…SILN), 452–474 (DLQH…ASMI), 480–501 (KLRT…AELA), 504–524 (CPLL…STGC), 532–558 (LPNL…ASNC), 559–583 (TRLR…LLES), and 584–609 (CKDL…LSAS).

As to quaternary structure, part of a SCF (SKP1-CUL1-F-box) protein ligase complex. Interacts with FAF2 and VCP. Interacts with PPTC7; this interaction promotes destruction of BNIP3 and NIX and mitophagy suppression.

It is found in the cytoplasm. It localises to the nucleus. Its subcellular location is the mitochondrion outer membrane. Substrate-recognition component of the mitochondria-localized SCF-FBXL4 ubiquitin E3 ligase complex that plays a role in the restriction of mitophagy by controlling the degradation of BNIP3 and NIX mitophagy receptors. Also rescues mitochondrial injury through reverting hyperactivation of DRP1-mediated mitochondrial fission. This is F-box/LRR-repeat protein 4 (FBXL4) from Bos taurus (Bovine).